The chain runs to 321 residues: Tetraacyldisaccharide 4'-kinase (321 aa).

Residue 54-61 coordinates ATP; sequence SVGGTGKT.

It belongs to the LpxK family.

The catalysed reaction is a lipid A disaccharide + ATP = a lipid IVA + ADP + H(+). The protein operates within glycolipid biosynthesis; lipid IV(A) biosynthesis; lipid IV(A) from (3R)-3-hydroxytetradecanoyl-[acyl-carrier-protein] and UDP-N-acetyl-alpha-D-glucosamine: step 6/6. Functionally, transfers the gamma-phosphate of ATP to the 4'-position of a tetraacyldisaccharide 1-phosphate intermediate (termed DS-1-P) to form tetraacyldisaccharide 1,4'-bis-phosphate (lipid IVA). The protein is Tetraacyldisaccharide 4'-kinase of Rickettsia typhi (strain ATCC VR-144 / Wilmington).